Consider the following 625-residue polypeptide: Phosphomethylpyrimidine synthase (625 aa).

Residues asparagine 231, methionine 260, tyrosine 289, histidine 325, 345–347, 386–389, and glutamate 425 each bind substrate; these read SRG and DGLR. Histidine 429 lines the Zn(2+) pocket. A substrate-binding site is contributed by tyrosine 452. Residue histidine 493 participates in Zn(2+) binding. Positions 573, 576, and 581 each coordinate [4Fe-4S] cluster.

This sequence belongs to the ThiC family. As to quaternary structure, homodimer. The cofactor is [4Fe-4S] cluster.

The catalysed reaction is 5-amino-1-(5-phospho-beta-D-ribosyl)imidazole + S-adenosyl-L-methionine = 4-amino-2-methyl-5-(phosphooxymethyl)pyrimidine + CO + 5'-deoxyadenosine + formate + L-methionine + 3 H(+). Its pathway is cofactor biosynthesis; thiamine diphosphate biosynthesis. In terms of biological role, catalyzes the synthesis of the hydroxymethylpyrimidine phosphate (HMP-P) moiety of thiamine from aminoimidazole ribotide (AIR) in a radical S-adenosyl-L-methionine (SAM)-dependent reaction. The sequence is that of Phosphomethylpyrimidine synthase from Acinetobacter baumannii (strain SDF).